Here is an 816-residue protein sequence, read N- to C-terminus: uncharacterized protein (816 aa).

Disordered regions lie at residues 1-81 and 391-411; these read MDVV…NSNN and LGSNSSTNENDSNDHDSNNDF. Over residues 28-44 the composition is skewed to low complexity; it reads EVPPQRPRQQNRWKPWW. Positions 64 to 81 are enriched in polar residues; it reads QGRSSPTTDFQDSVNSNN. A phosphoserine mark is found at S76 and S79. Low complexity predominate over residues 391-400; the sequence is LGSNSSTNEN.

This is an uncharacterized protein from Saccharomyces cerevisiae (strain ATCC 204508 / S288c) (Baker's yeast).